Consider the following 338-residue polypeptide: Dihydroorotate dehydrogenase (quinone) (338 aa).

FMN is bound by residues 59–63 and Thr83; that span reads AGLDK. Lys63 contributes to the substrate binding site. 108–112 is a binding site for substrate; that stretch reads NRMGF. FMN contacts are provided by Asn136 and Asn169. Asn169 is a binding site for substrate. Ser172 acts as the Nucleophile in catalysis. Asn174 contacts substrate. Residues Lys214 and Thr242 each contribute to the FMN site. 243 to 244 lines the substrate pocket; that stretch reads NT. FMN contacts are provided by residues Gly265, Gly294, and 315–316; that span reads YS.

This sequence belongs to the dihydroorotate dehydrogenase family. Type 2 subfamily. Monomer. It depends on FMN as a cofactor.

It localises to the cell membrane. The enzyme catalyses (S)-dihydroorotate + a quinone = orotate + a quinol. It participates in pyrimidine metabolism; UMP biosynthesis via de novo pathway; orotate from (S)-dihydroorotate (quinone route): step 1/1. Its function is as follows. Catalyzes the conversion of dihydroorotate to orotate with quinone as electron acceptor. The chain is Dihydroorotate dehydrogenase (quinone) from Azoarcus sp. (strain BH72).